Consider the following 137-residue polypeptide: Small ribosomal subunit protein uS11 (137 aa).

Residues 116–137 form a disordered region; it reads EDVTPVPSDSTRKKGGRRGRRL. Residues 128 to 137 are compositionally biased toward basic residues; that stretch reads KKGGRRGRRL.

This sequence belongs to the universal ribosomal protein uS11 family.

The sequence is that of Small ribosomal subunit protein uS11 (RPS14) from Kluyveromyces lactis (strain ATCC 8585 / CBS 2359 / DSM 70799 / NBRC 1267 / NRRL Y-1140 / WM37) (Yeast).